The sequence spans 385 residues: Chaperone protein DnaJ (385 aa).

In terms of domain architecture, J spans aspartate 5–glycine 70. Residues glycine 141–glutamate 219 form a CR-type zinc finger. Cysteine 154, cysteine 157, cysteine 171, cysteine 174, cysteine 193, cysteine 196, cysteine 207, and cysteine 210 together coordinate Zn(2+). CXXCXGXG motif repeat units follow at residues cysteine 154 to glycine 161, cysteine 171 to glycine 178, cysteine 193 to glycine 200, and cysteine 207 to glycine 214.

Belongs to the DnaJ family. As to quaternary structure, homodimer. Zn(2+) is required as a cofactor.

The protein resides in the cytoplasm. Its function is as follows. Participates actively in the response to hyperosmotic and heat shock by preventing the aggregation of stress-denatured proteins and by disaggregating proteins, also in an autonomous, DnaK-independent fashion. Unfolded proteins bind initially to DnaJ; upon interaction with the DnaJ-bound protein, DnaK hydrolyzes its bound ATP, resulting in the formation of a stable complex. GrpE releases ADP from DnaK; ATP binding to DnaK triggers the release of the substrate protein, thus completing the reaction cycle. Several rounds of ATP-dependent interactions between DnaJ, DnaK and GrpE are required for fully efficient folding. Also involved, together with DnaK and GrpE, in the DNA replication of plasmids through activation of initiation proteins. In Methylorubrum extorquens (strain PA1) (Methylobacterium extorquens), this protein is Chaperone protein DnaJ.